A 1464-amino-acid polypeptide reads, in one-letter code: Glutamate receptor ionotropic, NMDA 2A (1464 aa).

The N-terminal stretch at 1-22 is a signal peptide; sequence MGRVGYWTLLVLPALLVWRGPA. Residues 23–556 lie on the Extracellular side of the membrane; sequence PSAAAEKGPP…SAFLEPFSAS (534 aa). H44 provides a ligand contact to Zn(2+). An N-linked (GlcNAc...) asparagine glycan is attached at N75. C87 and C320 are oxidised to a cystine. Residues H128, E266, and D282 each coordinate Zn(2+). N340, N380, N443, and N444 each carry an N-linked (GlcNAc...) asparagine glycan. 2 cysteine pairs are disulfide-bonded: C429–C455 and C436–C456. S511, T513, and R518 together coordinate L-glutamate. The N-linked (GlcNAc...) asparagine glycan is linked to N541. Residues 557-576 traverse the membrane as a helical segment; sequence VWVMMFVMLLIVSAIAVFVF. Over 577–600 the chain is Cytoplasmic; it reads EYFSPVGYNRNLAKGKAPHGPSFT. Residues 599-620 form a pore-forming region; it reads FTIGKAIWLLWGLVFNNSVPVQ. The segment at residues 601-615 is an intramembrane region (discontinuously helical); sequence IGKAIWLLWGLVFNN. Residues 616–625 lie on the Cytoplasmic side of the membrane; that stretch reads SVPVQNPKGT. Residues 626–646 traverse the membrane as a helical segment; sequence TSKIMVSVWAFFAVIFLASYT. The Extracellular segment spans residues 647–814; it reads ANLAAFMIQE…NEVMSSQLDI (168 aa). N687 is a glycosylation site (N-linked (GlcNAc...) asparagine). L-glutamate is bound by residues S689, T690, and D731. C745 and C800 are joined by a disulfide. The helical transmembrane segment at 815–835 threads the bilayer; sequence DNMAGVFYMLAAAMALSLITF. Topologically, residues 836–1464 are cytoplasmic; that stretch reads IWEHLFYWKL…KKMPSIESDV (629 aa). Phosphoserine occurs at positions 882, 890, and 929. Composition is skewed to polar residues over residues 1001–1010 and 1023–1032; these read STESKVNSRP and QDSLSQNPVS. Disordered regions lie at residues 1001-1088 and 1148-1180; these read STES…NFKR and PDPY…GLSN. Phosphoserine is present on S1025. Composition is skewed to basic and acidic residues over residues 1033 to 1043 and 1052 to 1061; these read QRDEATAENRT and LPEEMAHSDI. Residues S1059 and S1062 each carry the phosphoserine modification. Basic and acidic residues predominate over residues 1070–1087; it reads CHREPDNSKNPKTKDNFK. Positions 1165–1180 are enriched in polar residues; sequence LPMNRNPLQNEEGLSN. Phosphoserine occurs at positions 1198 and 1291. Residues 1335–1372 are disordered; that stretch reads KLSGKKSSLFPQGLEDSKRSKSLLPDHTSDNPFLHSHR. Positions 1462 to 1464 match the PDZ-binding motif; that stretch reads SDV.

Belongs to the glutamate-gated ion channel (TC 1.A.10.1) family. NR2A/GRIN2A subfamily. Heterotetramer. Forms heterotetrameric channels composed of two GluN1/zeta subunits (GRIN1), and two identical GluN2/epsilon subunits (GRIN2A, GRIN2B, GRIN2C or GRIN2D) or GluN3 subunits (GRIN3A or GRIN3B) (in vitro). Can also form heterotetrameric channels that contain at least two GluN1 subunits and at least two different GluN2 subunits (or a combination of one GluN2 and one GluN3 subunits) (in vitro). In vivo, the subunit composition may depend on the expression levels of the different subunits. Found in a complex with GRIN1, GRIN3A and PPP2CB. Found in a complex with GRIN1 and GRIN3B. Interacts with AIP1. Interacts with HIP1 and NETO1. Interacts with SNX27 (via PDZ domain); the interaction is required for recycling to the plasma membrane when endocytosed and prevent degradation in lysosomes. Interacts with PDZ domains of PATJ and DLG4. Interacts with LRFN2. Interacts with RPH3A and DLG4; this ternary complex regulates NMDA receptor composition at postsynaptic membranes. Interacts with SORCS2. Interacts with ARC; preventing ARC oligomerization. Interacts (via the extreme C-terminus) with FRMPD2 (the second PDZ domain); the interaction is direct and is likely to promote NMDAR-mediated neural signal transmission. GRIN2A binds FRMPD2 with lower affinity than GRIN2B.

The protein localises to the cell projection. It is found in the dendritic spine. The protein resides in the cell membrane. Its subcellular location is the synapse. It localises to the postsynaptic cell membrane. The protein localises to the cytoplasmic vesicle membrane. The enzyme catalyses Ca(2+)(in) = Ca(2+)(out). It catalyses the reaction Na(+)(in) = Na(+)(out). The catalysed reaction is K(+)(in) = K(+)(out). In terms of biological role, component of N-methyl-D-aspartate (NMDA) receptors (NMDARs) that function as heterotetrameric, ligand-gated cation channels with high calcium permeability and voltage-dependent block by Mg(2+). NMDARs participate in synaptic plasticity for learning and memory formation by contributing to the slow phase of excitatory postsynaptic current, long-term synaptic potentiation, and learning. Channel activation requires binding of the neurotransmitter L-glutamate to the GluN2 subunit, glycine or D-serine binding to the GluN1 subunit, plus membrane depolarization to eliminate channel inhibition by Mg(2+). NMDARs mediate simultaneously the potasium efflux and the influx of calcium and sodium. Each GluN2 subunit confers differential attributes to channel properties, including activation, deactivation and desensitization kinetics, pH sensitivity, Ca2(+) permeability, and binding to allosteric modulators. Participates in the synaptic plasticity regulation through activation by the L-glutamate releaseed by BEST1, into the synaptic cleft, upon F2R/PAR-1 activation in astrocyte. This Pan troglodytes (Chimpanzee) protein is Glutamate receptor ionotropic, NMDA 2A.